The sequence spans 685 residues: tRNA-dihydrouridine(47) synthase [NAD(P)(+)]-like (685 aa).

Residues 1-12 are compositionally biased toward low complexity; sequence MAATAAAAAAAP. 3 disordered regions span residues 1–91, 209–234, and 257–314; these read MAAT…SSSH, AANDDKKVNHDNLDGNDDENKEPLCN, and LIDN…SCRT. Over residues 13-29 the composition is skewed to pro residues; sequence PADPPDSSPAASSPPRP. The C3H1-type zinc finger occupies 87 to 118; sequence KSSSHLCIEVGKSGNVSSCKYGDSCRFSHDID. Composition is skewed to basic and acidic residues over residues 209–221 and 273–284; these read AANDDKKVNHDNL and SKVESDEIDKHG. Residues 287 to 314 show a composition bias toward polar residues; that stretch reads TLNTNTESEDPNLSNGLEPSNNSSSCRT. FMN contacts are provided by residues 338-340 and Gln392; that span reads PLT. Cys423 functions as the Proton donor in the catalytic mechanism. Residues Lys462, His492, 525–527, and 550–551 each bind FMN; these read NGD and AR.

The protein belongs to the Dus family. Dus3 subfamily. FMN is required as a cofactor.

It catalyses the reaction 5,6-dihydrouridine(47) in tRNA + NAD(+) = uridine(47) in tRNA + NADH + H(+). The catalysed reaction is 5,6-dihydrouridine(47) in tRNA + NADP(+) = uridine(47) in tRNA + NADPH + H(+). The enzyme catalyses a 5,6-dihydrouridine in mRNA + NAD(+) = a uridine in mRNA + NADH + H(+). It carries out the reaction a 5,6-dihydrouridine in mRNA + NADP(+) = a uridine in mRNA + NADPH + H(+). In terms of biological role, catalyzes the synthesis of dihydrouridine, a modified base found in the D-loop of most tRNAs. Specifically modifies U47 in cytoplasmic tRNAs. Catalyzes the synthesis of dihydrouridine in some mRNAs, thereby affecting their translation. This chain is tRNA-dihydrouridine(47) synthase [NAD(P)(+)]-like, found in Oryza sativa subsp. japonica (Rice).